We begin with the raw amino-acid sequence, 153 residues long: Large ribosomal subunit protein uL22 (153 aa).

Residues 128-153 are disordered; it reads ADRRARRAAAKPAASASPAANEGVPA. Over residues 137–147 the composition is skewed to low complexity; that stretch reads AKPAASASPAA.

Belongs to the universal ribosomal protein uL22 family. As to quaternary structure, part of the 50S ribosomal subunit.

Its function is as follows. This protein binds specifically to 23S rRNA; its binding is stimulated by other ribosomal proteins, e.g. L4, L17, and L20. It is important during the early stages of 50S assembly. It makes multiple contacts with different domains of the 23S rRNA in the assembled 50S subunit and ribosome. The globular domain of the protein is located near the polypeptide exit tunnel on the outside of the subunit, while an extended beta-hairpin is found that lines the wall of the exit tunnel in the center of the 70S ribosome. In Acidiphilium cryptum (strain JF-5), this protein is Large ribosomal subunit protein uL22.